The following is a 434-amino-acid chain: GTPase Obg (434 aa).

The Obg domain occupies 1 to 158 (MFIDRAKIYV…RWLYLELKLL (158 aa)). The OBG-type G domain occupies 159–328 (ADVGLLGLPN…LLELMEKYVK (170 aa)). GTP is bound by residues 165 to 172 (GLPNAGKS), 190 to 194 (FTTKT), 211 to 214 (DIPG), 280 to 283 (NKID), and 309 to 311 (SAK). The Mg(2+) site is built by S172 and T192. Positions 347-425 (KQENKKQEIP…IGNYVFKYNS (79 aa)) constitute an OCT domain.

Belongs to the TRAFAC class OBG-HflX-like GTPase superfamily. OBG GTPase family. In terms of assembly, monomer. It depends on Mg(2+) as a cofactor.

The protein resides in the cytoplasm. In terms of biological role, an essential GTPase which binds GTP, GDP and possibly (p)ppGpp with moderate affinity, with high nucleotide exchange rates and a fairly low GTP hydrolysis rate. Plays a role in control of the cell cycle, stress response, ribosome biogenesis and in those bacteria that undergo differentiation, in morphogenesis control. The protein is GTPase Obg of Dictyoglomus turgidum (strain DSM 6724 / Z-1310).